The following is a 491-amino-acid chain: uncharacterized protein (491 aa).

An ATP-binding site is contributed by 267-274 (GIQGTGKS).

This sequence belongs to the AAA ATPase family. Highly divergent.

Its subcellular location is the plastid. The protein localises to the chloroplast. This is an uncharacterized protein from Gracilaria tenuistipitata var. liui (Red alga).